The primary structure comprises 241 residues: Nuclear receptor-interacting protein 3 (241 aa).

This Homo sapiens (Human) protein is Nuclear receptor-interacting protein 3 (NRIP3).